Here is a 495-residue protein sequence, read N- to C-terminus: Glycerol kinase (495 aa).

Threonine 16 contacts ADP. Threonine 16 and threonine 17 together coordinate ATP. Position 16 (threonine 16) interacts with sn-glycerol 3-phosphate. Arginine 20 lines the ADP pocket. Residues arginine 86, glutamate 87, tyrosine 138, and aspartate 246 each contribute to the sn-glycerol 3-phosphate site. Positions 86, 87, 138, 246, and 247 each coordinate glycerol. 2 residues coordinate ADP: threonine 268 and glycine 316. 4 residues coordinate ATP: threonine 268, glycine 316, glutamine 320, and glycine 417. Positions 417 and 421 each coordinate ADP.

This sequence belongs to the FGGY kinase family.

The catalysed reaction is glycerol + ATP = sn-glycerol 3-phosphate + ADP + H(+). The protein operates within polyol metabolism; glycerol degradation via glycerol kinase pathway; sn-glycerol 3-phosphate from glycerol: step 1/1. With respect to regulation, inhibited by fructose 1,6-bisphosphate (FBP). Functionally, key enzyme in the regulation of glycerol uptake and metabolism. Catalyzes the phosphorylation of glycerol to yield sn-glycerol 3-phosphate. The protein is Glycerol kinase of Synechocystis sp. (strain ATCC 27184 / PCC 6803 / Kazusa).